The following is a 104-amino-acid chain: L-rhamnose mutarotase (104 aa).

Y18 contacts substrate. Residue H22 is the Proton donor of the active site. Substrate contacts are provided by residues Y41 and 76–77; that span reads WW.

It belongs to the rhamnose mutarotase family. Homodimer.

The protein resides in the cytoplasm. The enzyme catalyses alpha-L-rhamnose = beta-L-rhamnose. It functions in the pathway carbohydrate metabolism; L-rhamnose metabolism. Its function is as follows. Involved in the anomeric conversion of L-rhamnose. The sequence is that of L-rhamnose mutarotase from Rhizobium meliloti (strain 1021) (Ensifer meliloti).